Consider the following 501-residue polypeptide: 2,3-bisphosphoglycerate-independent phosphoglycerate mutase (501 aa).

Residues D12 and S62 each contribute to the Mn(2+) site. Catalysis depends on S62, which acts as the Phosphoserine intermediate. Substrate contacts are provided by residues H121, 150–151 (RD), R182, R188, 253–256 (RSDR), and K322. Mn(2+) contacts are provided by D389, H393, D430, H431, and H449.

Belongs to the BPG-independent phosphoglycerate mutase family. In terms of assembly, monomer. It depends on Mn(2+) as a cofactor.

The catalysed reaction is (2R)-2-phosphoglycerate = (2R)-3-phosphoglycerate. Its pathway is carbohydrate degradation; glycolysis; pyruvate from D-glyceraldehyde 3-phosphate: step 3/5. Its function is as follows. Catalyzes the interconversion of 2-phosphoglycerate and 3-phosphoglycerate. In Ehrlichia ruminantium (strain Gardel), this protein is 2,3-bisphosphoglycerate-independent phosphoglycerate mutase.